The following is a 186-amino-acid chain: Large ribosomal subunit protein uL5 (186 aa).

The protein belongs to the universal ribosomal protein uL5 family. As to quaternary structure, part of the 50S ribosomal subunit; part of the 5S rRNA/L5/L18/L25 subcomplex. Contacts the 5S rRNA and the P site tRNA. Forms a bridge to the 30S subunit in the 70S ribosome.

Its function is as follows. This is one of the proteins that bind and probably mediate the attachment of the 5S RNA into the large ribosomal subunit, where it forms part of the central protuberance. In the 70S ribosome it contacts protein S13 of the 30S subunit (bridge B1b), connecting the 2 subunits; this bridge is implicated in subunit movement. Contacts the P site tRNA; the 5S rRNA and some of its associated proteins might help stabilize positioning of ribosome-bound tRNAs. This Phenylobacterium zucineum (strain HLK1) protein is Large ribosomal subunit protein uL5.